We begin with the raw amino-acid sequence, 174 residues long: Co-chaperone protein HscB (174 aa).

The 73-residue stretch at 2-74 folds into the J domain; that stretch reads DYFTLFGLPA…LKRAEYMLSL (73 aa).

It belongs to the HscB family. Interacts with HscA and stimulates its ATPase activity. Interacts with IscU.

Co-chaperone involved in the maturation of iron-sulfur cluster-containing proteins. Seems to help targeting proteins to be folded toward HscA. This chain is Co-chaperone protein HscB, found in Yersinia pseudotuberculosis serotype O:1b (strain IP 31758).